Consider the following 131-residue polypeptide: F(420)H(2) dehydrogenase subunit O (131 aa).

3 residues coordinate [2Fe-2S] cluster: cysteine 58, cysteine 63, and cysteine 66.

Belongs to the FpoO family. In terms of assembly, the FPO complex is composed of at least 13 different subunits. The cofactor is [2Fe-2S] cluster.

The catalysed reaction is methanophenazine + reduced coenzyme F420-(gamma-L-Glu)(n) = dihydromethanophenazine + oxidized coenzyme F420-(gamma-L-Glu)(n) + H(+). Component of the F(420)H(2) dehydrogenase (FPO complex) which is part of the energy-conserving F(420)H(2):heterodisulfide oxidoreductase system. The membrane-bound electron transfer system of the complex plays an important role in the metabolism of methylotrophic methanogens when the organisms grow on methanol or methylamines. Catalyzes the oxidation of methanophenazine to dihydromethanophenazine. It shuttles electrons from F(420)H(2), via FAD and iron-sulfur (Fe-S) centers, to methanophenazine (an electron carrier in the membrane). It couples the redox reaction to proton translocation (for every two electrons transferred, two hydrogen ions are translocated across the cytoplasmic membrane), and thus conserves the redox energy in a proton gradient. It also catalyzes the oxidation of F(420)H(2) with quinones such as 2,3-dimethyl-1,4-naphthoquinone, 2-methyl-1,4-naphthoquinone and tetramethyl-p-benzoquinone. This Methanosarcina mazei (strain ATCC BAA-159 / DSM 3647 / Goe1 / Go1 / JCM 11833 / OCM 88) (Methanosarcina frisia) protein is F(420)H(2) dehydrogenase subunit O (fpoO).